The sequence spans 215 residues: Ribose-5-phosphate isomerase A (215 aa).

Substrate contacts are provided by residues 26–29 (TGST), 79–82 (DGAD), and 92–95 (KGGG). Catalysis depends on glutamate 101, which acts as the Proton acceptor. Residue lysine 119 participates in substrate binding.

This sequence belongs to the ribose 5-phosphate isomerase family. Homodimer.

It catalyses the reaction aldehydo-D-ribose 5-phosphate = D-ribulose 5-phosphate. It functions in the pathway carbohydrate degradation; pentose phosphate pathway; D-ribose 5-phosphate from D-ribulose 5-phosphate (non-oxidative stage): step 1/1. In terms of biological role, catalyzes the reversible conversion of ribose-5-phosphate to ribulose 5-phosphate. This chain is Ribose-5-phosphate isomerase A, found in Xanthomonas campestris pv. campestris (strain 8004).